The following is a 143-amino-acid chain: 3-dehydroquinate dehydratase (143 aa).

Tyr-22 acts as the Proton acceptor in catalysis. Residues Asn-73, His-79, and Asp-86 each contribute to the substrate site. The active-site Proton donor is the His-99. Substrate-binding positions include 100 to 101 (LS) and Arg-110.

The protein belongs to the type-II 3-dehydroquinase family. Homododecamer.

It carries out the reaction 3-dehydroquinate = 3-dehydroshikimate + H2O. It participates in metabolic intermediate biosynthesis; chorismate biosynthesis; chorismate from D-erythrose 4-phosphate and phosphoenolpyruvate: step 3/7. Its function is as follows. Catalyzes a trans-dehydration via an enolate intermediate. The sequence is that of 3-dehydroquinate dehydratase from Salinispora tropica (strain ATCC BAA-916 / DSM 44818 / JCM 13857 / NBRC 105044 / CNB-440).